The chain runs to 258 residues: Redox-sensing transcriptional repressor Rex (258 aa).

A DNA-binding region (H-T-H motif) is located at residues 26–65; sequence LYLRALTALSERSVPTVSSEELAAAAGVNSAKLRKDFSYL. 100–105 is a binding site for NAD(+); the sequence is GIGNLG. Residues 219–258 are disordered; sequence AGEEAAADGAAPPVAARKQQRSTGSADQGPDGDVPAVMPA. Over residues 225-234 the composition is skewed to low complexity; sequence ADGAAPPVAA.

It belongs to the transcriptional regulatory Rex family. Homodimer.

It localises to the cytoplasm. Functionally, modulates transcription of respiratory genes in response to changes in cellular NADH/NAD(+) redox state. Binds to the DNA sequence motif 5'-TGTGAACGCGTTCACA-3' in the promoter of the cydABCD operon. May play a general role as a sensor of cellular redox balance. This is Redox-sensing transcriptional repressor Rex from Streptomyces coelicolor (strain ATCC BAA-471 / A3(2) / M145).